The chain runs to 152 residues: Nucleoside diphosphate kinase A (152 aa).

ATP-binding residues include lysine 12, phenylalanine 60, arginine 88, and threonine 94. A Glycyl lysine isopeptide (Lys-Gly) (interchain with G-Cter in ubiquitin) cross-link involves residue lysine 100. Residues arginine 105 and asparagine 115 each coordinate ATP. Histidine 118 acts as the Pros-phosphohistidine intermediate in catalysis. Residues serine 120, serine 122, and serine 125 each carry the phosphoserine modification.

Belongs to the NDK family. Hexamer of two different chains: An and B (A6, A5B, A4B2, A3B3, A2B4, AB5, B6). Interacts with PRUNE1. Component of the SET complex, composed of at least ANP32A, APEX1, HMGB2, NME1, SET and TREX1. Within this complex, interacts directly with SET. Also interacts with TREX1, but only following translocation to the nucleus. Mg(2+) is required as a cofactor.

Its subcellular location is the cytoplasm. The protein localises to the nucleus. The enzyme catalyses a 2'-deoxyribonucleoside 5'-diphosphate + ATP = a 2'-deoxyribonucleoside 5'-triphosphate + ADP. It catalyses the reaction a ribonucleoside 5'-diphosphate + ATP = a ribonucleoside 5'-triphosphate + ADP. Autophosphorylation at His-118 increases serine/threonine protein kinase activity of the enzyme. Interaction with the SET complex inhibits exonuclease activity. Its function is as follows. Major role in the synthesis of nucleoside triphosphates other than ATP. The ATP gamma phosphate is transferred to the NDP beta phosphate via a ping-pong mechanism, using a phosphorylated active-site intermediate. Possesses nucleoside-diphosphate kinase, serine/threonine-specific protein kinase, geranyl and farnesyl pyrophosphate kinase, histidine protein kinase and 3'-5' exonuclease activities. Involved in cell proliferation, differentiation and development, signal transduction, G protein-coupled receptor endocytosis, and gene expression. Required for neural development including neural patterning and cell fate determination. During GZMA-mediated cell death, works in concert with TREX1. NME1 nicks one strand of DNA and TREX1 removes bases from the free 3' end to enhance DNA damage and prevent DNA end reannealing and rapid repair. In Rattus norvegicus (Rat), this protein is Nucleoside diphosphate kinase A (Nme1).